The following is a 620-amino-acid chain: Chaperone protein HscA homolog (620 aa).

The protein belongs to the heat shock protein 70 family.

Chaperone involved in the maturation of iron-sulfur cluster-containing proteins. Has a low intrinsic ATPase activity which is markedly stimulated by HscB. In Janthinobacterium sp. (strain Marseille) (Minibacterium massiliensis), this protein is Chaperone protein HscA homolog.